We begin with the raw amino-acid sequence, 203 residues long: Cytochrome c biogenesis CcmF N-terminal-like mitochondrial protein 2 (203 aa).

2 consecutive transmembrane segments (helical) span residues 44–64 (IWIL…SWWA) and 143–163 (IFLW…FYQM).

Belongs to the CcmF/CycK/Ccl1/NrfE/CcsA family. As to quaternary structure, interacts with CCMFC, CCMFN1, CCMH and CYTC-1.

Its subcellular location is the mitochondrion inner membrane. In terms of biological role, forms a complex with CCMFC, CCMFN1 and CCMH that performs the assembly of heme with c-type apocytochromes in mitochondria. The protein is Cytochrome c biogenesis CcmF N-terminal-like mitochondrial protein 2 of Arabidopsis thaliana (Mouse-ear cress).